Consider the following 225-residue polypeptide: Vacuolar protein sorting-associated protein 2 homolog 1 (225 aa).

Positions 13 to 54 (AELLRENKRMLDKSIREIERERQGLQTQEKKLINEIKKTAKQ) form a coiled coil.

It belongs to the SNF7 family. Component of the endosomal sorting required for transport complex III (ESCRT-III), composed at least of VPS2, VPS20, VPS24 and VPS32. Interacts with SKD1.

Its subcellular location is the endosome. In terms of biological role, component of the ESCRT-III complex, which is required for multivesicular bodies (MVBs) formation and sorting of endosomal cargo proteins into MVBs. The ESCRT-III complex is probably involved in the concentration of MVB cargo. In Arabidopsis thaliana (Mouse-ear cress), this protein is Vacuolar protein sorting-associated protein 2 homolog 1 (VPS2.1).